The sequence spans 519 residues: Probable carboxypeptidase S-like 2 (519 aa).

Residues 25–45 form a helical membrane-spanning segment; it reads FNLIKIIIRNLLIGILLMLVL. Residue histidine 151 coordinates Zn(2+). Aspartate 153 is a catalytic residue. Residue aspartate 184 coordinates Zn(2+). Catalysis depends on glutamate 218, which acts as the Proton acceptor. Zn(2+) contacts are provided by glutamate 219, aspartate 246, and histidine 490.

This sequence belongs to the peptidase M20A family. It depends on Zn(2+) as a cofactor.

It is found in the membrane. The polypeptide is Probable carboxypeptidase S-like 2 (Dictyostelium discoideum (Social amoeba)).